We begin with the raw amino-acid sequence, 296 residues long: Tyrosine recombinase XerC (296 aa).

The 84-residue stretch at 1-84 folds into the Core-binding (CB) domain; that stretch reads MDKIQETFLY…TLRTFYEFWM (84 aa). In terms of domain architecture, Tyr recombinase spans 105–286; it reads YLPQFFYEEE…SNQQLRKVYL (182 aa). Residues arginine 145, lysine 169, histidine 238, arginine 241, and histidine 264 contribute to the active site. The active-site O-(3'-phospho-DNA)-tyrosine intermediate is tyrosine 273.

Belongs to the 'phage' integrase family. XerC subfamily. As to quaternary structure, forms a cyclic heterotetrameric complex composed of two molecules of XerC and two molecules of XerD.

The protein localises to the cytoplasm. In terms of biological role, site-specific tyrosine recombinase, which acts by catalyzing the cutting and rejoining of the recombining DNA molecules. The XerC-XerD complex is essential to convert dimers of the bacterial chromosome into monomers to permit their segregation at cell division. It also contributes to the segregational stability of plasmids. This Staphylococcus epidermidis (strain ATCC 35984 / DSM 28319 / BCRC 17069 / CCUG 31568 / BM 3577 / RP62A) protein is Tyrosine recombinase XerC.